The following is a 282-amino-acid chain: Bifunctional protein FolD 2 (282 aa).

NADP(+) contacts are provided by residues 165–167 and S190; that span reads GRS.

The protein belongs to the tetrahydrofolate dehydrogenase/cyclohydrolase family. Homodimer.

The catalysed reaction is (6R)-5,10-methylene-5,6,7,8-tetrahydrofolate + NADP(+) = (6R)-5,10-methenyltetrahydrofolate + NADPH. It catalyses the reaction (6R)-5,10-methenyltetrahydrofolate + H2O = (6R)-10-formyltetrahydrofolate + H(+). It participates in one-carbon metabolism; tetrahydrofolate interconversion. Its function is as follows. Catalyzes the oxidation of 5,10-methylenetetrahydrofolate to 5,10-methenyltetrahydrofolate and then the hydrolysis of 5,10-methenyltetrahydrofolate to 10-formyltetrahydrofolate. This is Bifunctional protein FolD 2 from Acinetobacter baylyi (strain ATCC 33305 / BD413 / ADP1).